The chain runs to 516 residues: MDQLMNFSLTSPIFLLLSSLFLIILLNKLMRGNKIQKGKKLPPGPKKIAIIGNLPSNGRFTSLIVFLNNLAEKYGPIMHLRIGQLSAVIISSAEKAKEILNTHGVRVADRPQTTVAKIMLYNSLGVTFAPYGDYLKQLRQIYAMELLSPKTVKSFWTIMDDELSTMITSIKSEVGQPMILHDKMMTYLYAMLCRATVGSVCNGRETLIMAAKETSALSASIRIEDLFPSVKILPVISGLKSKLTNLLKELDIVLEDIISAREKKLLSQPQQPLMLDEEDMLGVLLKYKNGKGNDTKFRVTNNDIKAIVFELILAGTLSSAAIVEWCMSELMKNPELLKKAQDEVRQVLKGKKTISGSDVGKLEYVKMVVKESVRLHPPAPLLFPRECREEFEIDGMTIPKKSWVIINYWAIGRDPKIWPNADKFEPERFSNNNIDFYGSNFELIPFGAGRRVCPGILFGTTNVELLLAAFLFHFDWELPGGMKPEELDMNELFGAGCIRENPLCLIPSISTVVEGN.

Residues 6 to 26 form a helical membrane-spanning segment; sequence NFSLTSPIFLLLSSLFLIILL. Position 453 (Cys-453) interacts with heme.

Belongs to the cytochrome P450 family. It depends on heme as a cofactor. Highly expressed in stems. Expressed at low levels in roots.

The protein resides in the endoplasmic reticulum membrane. The catalysed reaction is tetrahydroalstonine + A + reduced [NADPH--hemoprotein reductase] + O2 = alstonine + AH2 + oxidized [NADPH--hemoprotein reductase] + 2 H2O + H(+). It carries out the reaction ajmalicine + A + reduced [NADPH--hemoprotein reductase] + O2 = serpentine + AH2 + oxidized [NADPH--hemoprotein reductase] + 2 H2O + H(+). It functions in the pathway alkaloid biosynthesis. Its function is as follows. Involved in monoterpene indole alkaloids (MIAs) biosynthesis. Converts by aromatization the tetrahydro-beta-carboline alkaloids tetrahydroalstonine and ajmalicine to the corresponding beta-carboline alkaloids alstonine and serpentine, respectively. This Catharanthus roseus (Madagascar periwinkle) protein is Alstonine synthase.